We begin with the raw amino-acid sequence, 141 residues long: Arsenate reductase (141 aa).

Catalysis depends on cysteine 12, which acts as the Nucleophile; cysteine thioarsenate intermediate.

This sequence belongs to the ArsC family.

The catalysed reaction is [glutaredoxin]-dithiol + arsenate + glutathione + H(+) = glutathionyl-S-S-[glutaredoxin] + arsenite + H2O. In terms of biological role, involved in resistance to arsenate. Catalyzes the reduction of arsenate [As(V)] to arsenite [As(III)]. The chain is Arsenate reductase from Escherichia coli.